Here is a 255-residue protein sequence, read N- to C-terminus: Capsid protein (255 aa).

The short motif at 1 to 25 (MVQKRKDLRRSDAGSAVRAKLHKAS) is the Bipartite nuclear localization signal element.

It belongs to the geminiviridae capsid protein family. In terms of assembly, homomultimer. Interacts with the movement protein. Binds to single-stranded and double-stranded viral DNA.

It localises to the virion. Its subcellular location is the host nucleus. In terms of biological role, encapsidates the viral genome into characteristic twinned ('geminate') particles. Binds the genomic viral ssDNA and shuttles it into and out of the cell nucleus. Plays a role in protection of the genome from degradation, virus acquisition and transmission by insect vectors, infectivity, and systemic movement. The CP of monopartite geminiviruses is absolutely essential for virus movement. The protein is Capsid protein of Miscanthus streak virus (isolate 91) (MiSV).